Reading from the N-terminus, the 222-residue chain is Interleukin-12 subunit alpha (222 aa).

The signal sequence occupies residues 1–25 (MCPPRGLLLVTILVLLNHLDHLSLA). 3 cysteine pairs are disulfide-bonded: cysteine 40-cysteine 113, cysteine 67-cysteine 199, and cysteine 88-cysteine 126. N-linked (GlcNAc...) asparagine glycosylation is found at asparagine 42, asparagine 96, asparagine 110, and asparagine 183.

It belongs to the IL-6 superfamily. In terms of assembly, heterodimer with IL12B; disulfide-linked. This heterodimer is known as interleukin IL-12. Heterodimer with EBI3/IL27B; not disulfide-linked. This heterodimer is known as interleukin IL-35. Interacts with NBR1; this interaction promotes IL-12 secretion.

The protein resides in the secreted. In terms of biological role, heterodimerizes with IL12B to form the IL-12 cytokine or with EBI3/IL27B to form the IL-35 cytokine. IL-12 is primarily produced by professional antigen-presenting cells (APCs) such as B-cells and dendritic cells (DCs) as well as macrophages and granulocytes and regulates T-cell and natural killer-cell responses, induces the production of interferon-gamma (IFN-gamma), favors the differentiation of T-helper 1 (Th1) cells and is an important link between innate resistance and adaptive immunity. Mechanistically, exerts its biological effects through a receptor composed of IL12R1 and IL12R2 subunits. Binding to the receptor results in the rapid tyrosine phosphorylation of a number of cellular substrates including the JAK family kinases TYK2 and JAK2. In turn, recruited STAT4 gets phosphorylated and translocates to the nucleus where it regulates cytokine/growth factor responsive genes. As part of IL-35, plays essential roles in maintaining the immune homeostasis of the liver microenvironment and also functions as an immune-suppressive cytokine. Mediates biological events through unconventional receptors composed of IL12RB2 and gp130/IL6ST heterodimers or homodimers. Signaling requires the transcription factors STAT1 and STAT4, which form a unique heterodimer that binds to distinct DNA sites. The polypeptide is Interleukin-12 subunit alpha (IL12A) (Felis catus (Cat)).